Here is a 299-residue protein sequence, read N- to C-terminus: dTDP-4-dehydrorhamnose reductase (299 aa).

NADH-binding positions include 10 to 12 (GQV), D30, 39 to 40 (DF), and 63 to 65 (AHT). 11–12 (QV) contributes to the NADPH binding site. Residues 39–40 (DF), 63–65 (AHT), and Y102 each bind NADPH. DTDP-beta-L-rhamnose is bound at residue 104 to 105 (TD). NADH contacts are provided by Y128 and K132. Residues Y128 and K132 each contribute to the NADPH site. The Proton donor/acceptor role is filled by Y128. W153 is a binding site for dTDP-beta-L-rhamnose.

The protein belongs to the dTDP-4-dehydrorhamnose reductase family. In terms of assembly, homodimer. Mg(2+) is required as a cofactor.

It carries out the reaction dTDP-beta-L-rhamnose + NADP(+) = dTDP-4-dehydro-beta-L-rhamnose + NADPH + H(+). It participates in carbohydrate biosynthesis; dTDP-L-rhamnose biosynthesis. The protein operates within bacterial outer membrane biogenesis; LPS O-antigen biosynthesis. Involved in the biosynthesis of the dTDP-L-rhamnose which is an important component of lipopolysaccharide (LPS). Catalyzes the reduction of dTDP-6-deoxy-L-lyxo-4-hexulose to yield dTDP-L-rhamnose. RmlD uses NADH and NADPH nearly equally well. This chain is dTDP-4-dehydrorhamnose reductase, found in Shigella flexneri.